The chain runs to 314 residues: Taste receptor type 2 member 42 (314 aa).

Over 1–7 the chain is Extracellular; sequence MATEMDK. A helical transmembrane segment spans residues 8–28; it reads IFLTLATVEFIIGMLGNVFIG. Residues 29–50 lie on the Cytoplasmic side of the membrane; the sequence is LVNCSEGIKNQKVFSVDFILTC. A helical transmembrane segment spans residues 51–71; it reads LAISTIGHLLVILFDSCVVGL. At 72–101 the chain is on the extracellular side; sequence APHLYATDRVRRPVTMLWHMXNHLTTWLAT. The chain crosses the membrane as a helical span at residues 102 to 122; that stretch reads CLSIFYFFKIAHFPHSLFLWL. At 123–127 the chain is on the cytoplasmic side; the sequence is RWRMN. The helical transmembrane segment at 128–148 threads the bilayer; that stretch reads RVIAILLTLSLFLLIFDCLVL. Over 149–187 the chain is Extracellular; that stretch reads EMFIDXSLNIIDKSNLTLYLDESKTPYDKLSLLKILLSL. Residue N163 is glycosylated (N-linked (GlcNAc...) asparagine). A helical transmembrane segment spans residues 188–208; that stretch reads NSFIPFSLCLTSLLFLFLSLV. The Cytoplasmic portion of the chain corresponds to 209-238; sequence RHTRNLKLSSLGSRDSSTEAHRRAMKMVMS. Residues 239–259 form a helical membrane-spanning segment; that stretch reads LLFLFIVHFFSLQVANWTFCI. At 260 to 265 the chain is on the extracellular side; that stretch reads LGNNKY. Residues 266–286 form a helical membrane-spanning segment; sequence TQFVTLALHAFPSCHSFILIL. Residues 287–314 are Cytoplasmic-facing; sequence GNSKLRQTAVRLLWHLRNYTKRPNPLPL.

It belongs to the G-protein coupled receptor T2R family.

The protein resides in the membrane. Its function is as follows. Receptor that may play a role in the perception of bitterness and is gustducin-linked. May play a role in sensing the chemical composition of the gastrointestinal content. The activity of this receptor may stimulate alpha gustducin, mediate PLC-beta-2 activation and lead to the gating of TRPM5. This is Taste receptor type 2 member 42 (TAS2R42) from Macaca mulatta (Rhesus macaque).